Here is a 731-residue protein sequence, read N- to C-terminus: Catalase-peroxidase (731 aa).

The segment at 1-23 (MSDLKCPFSGHTGAVTPAGNTNN) is disordered. The tryptophyl-tyrosyl-methioninium (Trp-Tyr) (with M-244) cross-link spans 95-218 (WHSAGTYRTG…LAAVEMGLIY (124 aa)). H96 functions as the Proton acceptor in the catalytic mechanism. A cross-link (tryptophyl-tyrosyl-methioninium (Tyr-Met) (with W-95)) is located at residues 218-244 (YVNPEGPHGEPDPVASGRDVRETFARM). H259 contributes to the heme b binding site.

The protein belongs to the peroxidase family. Peroxidase/catalase subfamily. In terms of assembly, homodimer or homotetramer. The cofactor is heme b. Post-translationally, formation of the three residue Trp-Tyr-Met cross-link is important for the catalase, but not the peroxidase activity of the enzyme.

It carries out the reaction H2O2 + AH2 = A + 2 H2O. The enzyme catalyses 2 H2O2 = O2 + 2 H2O. Its function is as follows. Bifunctional enzyme with both catalase and broad-spectrum peroxidase activity. The protein is Catalase-peroxidase of Synechococcus sp. (strain WH7803).